Reading from the N-terminus, the 1027-residue chain is Transient-receptor-potential-like protein (1027 aa).

A disordered region spans residues 1 to 22 (MTKEGMLSAAGRRFSRCAPSPR). ANK repeat units follow at residues 85–115 (MGRT…RIGN), 117–141 (LLCA…ITRE), and 163–192 (SDIS…SIEK). The next 6 helical transmembrane spans lie at 355-375 (FFLY…YILM), 391-411 (FFYY…ATFE), 473-493 (FLMI…YYIF), 516-536 (VAEA…IYLF), 559-579 (FCFI…QLYW), and 640-660 (MFIM…IAMM). 2 disordered regions span residues 825 to 929 (KRDI…TYTS) and 1008 to 1027 (ENVK…NVEK). A compositionally biased stretch (acidic residues) spans 855–874 (EESEEDDKSDETSSTDEEAD). The span at 910-923 (RASEADSKLPDRPL) shows a compositional bias: basic and acidic residues. The segment covering 1008–1017 (ENVKSPSPAS) has biased composition (polar residues).

The protein belongs to the transient receptor (TC 1.A.4) family. STrpC subfamily.

It is found in the membrane. Functionally, could mediate calcium entry and form a calcium permeant channel. This is Transient-receptor-potential-like protein (trp-1) from Caenorhabditis elegans.